The chain runs to 2169 residues: Protein sidekick-1 (2169 aa).

Residues 1–50 (MVGRKVDREIIARRNSRRDGMMMKLNFCFFFCRRWWAFLLLQLHMLQALA) form the signal peptide. Over 51–1961 (QDDVAPYFKT…TEAPFYEEWW (1911 aa)) the chain is Extracellular. 5 Ig-like C2-type domains span residues 56 to 138 (PYFK…SEVQ), 143 to 229 (GNFM…SPLI), 245 to 333 (PIIV…AFIS), 338 to 428 (PYFT…LDVT), and 432 to 521 (PAFI…VMLT). A disulfide bond links C78 and C121. Residues N93, N223, and N253 are each glycosylated (N-linked (GlcNAc...) asparagine). Intrachain disulfides connect C267–C314, C360–C410, and C453–C505. N-linked (GlcNAc...) asparagine glycans are attached at residues N502, N524, and N534. Residues 525-615 (RTFIVHPPEN…GNDSRMARLE (91 aa)) enclose the Ig-like C2-type 6 domain. A disulfide bridge connects residues C547 and C599. N607, N631, N734, N773, N834, N967, and N977 each carry an N-linked (GlcNAc...) asparagine glycan. 13 Fibronectin type-III domains span residues 622 to 718 (SPQN…LPEE), 723 to 819 (PPKN…TLQG), 824 to 922 (PPQN…TLED), 926 to 1020 (AVGH…VPPE), 1024 to 1123 (APSN…TLQA), 1128 to 1226 (APGS…TRES), 1231 to 1328 (PPEN…TKDD), 1332 to 1426 (PPIR…TEKR), 1431 to 1528 (PPQQ…TLQD), 1533 to 1651 (PPSS…VGEA), 1656 to 1752 (APQN…THQA), 1756 to 1851 (APSF…AGPA), and 1854 to 1955 (SPGS…TEAP). N-linked (GlcNAc...) asparagine glycosylation is found at N1234 and N1285. A disordered region spans residues 1423–1443 (TEKRERPAPPQQLTTPQSDVS). The segment covering 1433-1443 (QQLTTPQSDVS) has biased composition (polar residues). 5 N-linked (GlcNAc...) asparagine glycosylation sites follow: N1606, N1700, N1719, N1771, and N1845. A helical transmembrane segment spans residues 1962 to 1982 (FLLVMALSSLILILLVVFALV). Residues 1983–2169 (LHGQSKKYKN…TPVTGFSSFV (187 aa)) lie on the Cytoplasmic side of the membrane. Disordered stretches follow at residues 2028 to 2050 (TFSKKNGTRSPPRPSPGGLHYSD) and 2145 to 2169 (GGVYTPTGQPAPGSRTPVTGFSSFV). Residues 2160–2169 (TPVTGFSSFV) show a composition bias toward polar residues. Positions 2163 to 2169 (TGFSSFV) match the PDZ-binding motif.

Belongs to the sidekick family. As to quaternary structure, homodimer; mediates homophilic interactions to promote cell adhesion. In terms of tissue distribution, expressed by non-overlapping subsets of retinal neurons. SDK1, SDK2, DSCAM and DSCAML1 are expressed in non-overlapping subsets of interneurons and retinal ganglion cells (RGCs) that form synapses in distinct inner plexiform layer (IPL) sublaminae.

Its subcellular location is the cell membrane. It localises to the synapse. Functionally, adhesion molecule that promotes lamina-specific synaptic connections in the retina. Expressed in specific subsets of interneurons and retinal ganglion cells (RGCs) and promotes synaptic connectivity via homophilic interactions. In Gallus gallus (Chicken), this protein is Protein sidekick-1.